Consider the following 647-residue polypeptide: tRNA 5-methylaminomethyl-2-thiouridine biosynthesis bifunctional protein MnmC (647 aa).

The tract at residues M1–T235 is tRNA (mnm(5)s(2)U34)-methyltransferase. The tract at residues I250–R647 is FAD-dependent cmnm(5)s(2)U34 oxidoreductase.

It in the N-terminal section; belongs to the methyltransferase superfamily. tRNA (mnm(5)s(2)U34)-methyltransferase family. In the C-terminal section; belongs to the DAO family. The cofactor is FAD.

It localises to the cytoplasm. The enzyme catalyses 5-aminomethyl-2-thiouridine(34) in tRNA + S-adenosyl-L-methionine = 5-methylaminomethyl-2-thiouridine(34) in tRNA + S-adenosyl-L-homocysteine + H(+). In terms of biological role, catalyzes the last two steps in the biosynthesis of 5-methylaminomethyl-2-thiouridine (mnm(5)s(2)U) at the wobble position (U34) in tRNA. Catalyzes the FAD-dependent demodification of cmnm(5)s(2)U34 to nm(5)s(2)U34, followed by the transfer of a methyl group from S-adenosyl-L-methionine to nm(5)s(2)U34, to form mnm(5)s(2)U34. The sequence is that of tRNA 5-methylaminomethyl-2-thiouridine biosynthesis bifunctional protein MnmC from Methylobacillus flagellatus (strain ATCC 51484 / DSM 6875 / VKM B-1610 / KT).